Here is a 556-residue protein sequence, read N- to C-terminus: DNA ligase B (556 aa).

Lysine 124 (N6-AMP-lysine intermediate) is an active-site residue.

Belongs to the NAD-dependent DNA ligase family. LigB subfamily.

It catalyses the reaction NAD(+) + (deoxyribonucleotide)n-3'-hydroxyl + 5'-phospho-(deoxyribonucleotide)m = (deoxyribonucleotide)n+m + AMP + beta-nicotinamide D-nucleotide.. Functionally, catalyzes the formation of phosphodiester linkages between 5'-phosphoryl and 3'-hydroxyl groups in double-stranded DNA using NAD as a coenzyme and as the energy source for the reaction. The sequence is that of DNA ligase B from Pseudomonas fluorescens (strain ATCC BAA-477 / NRRL B-23932 / Pf-5).